Reading from the N-terminus, the 1020-residue chain is MKLQVRVVEARNLPAMDLNGFSDPYVRLQLGKQRSRTKVVKKNLNPKWTEDFSFGVDDLNDELVVSVLDEDKYFNDDFVGQVRVSVSLVFDAENQSLGTVWYPLNPKKKGSKKDCGEILLKICFSQKNSVLDLTSSGDQTSASRSPDLRLESPIDPSTCASPSRSDDASSIPQTTFAGRFTQIFQKNAITATPTQSSSRSIDASDLSEISKPVFSLELSEDESSSTSFEELLKAMESKDQGSEPPSNLSGGVVVDQLFMISPSDLNIVLFASDSSFYASLTELQGTTEVQIGPWKAENDGESVKRVVSYLKAATKLIKAVKGTEEQTYLKADGEVYAVLASVATPDVPFGGTFKVEVLYCISPGPELPSGEQCSRLVVSWRLNFLQSTMMRGMIENGARQGLKDNFEQYANLLAQSVKPVDSKDIGLNKEQALSSLQAEPQSDWKLAVQYFANFTVLSTFLIGIYVFVHIVFAIPSAIQGLEFNGLDLPDSIGEFVVSGVLVLQCERVLQLISRFMQARKQKGSDHGIKAHGDGWLLTVALIEGVDLAAVDPSGHCDPYIVFTSNGKTRTSSIKFQKSNPQWNEIFEFDAMADPPSVLNVEVFDFDGPFDEAVSLGHAEVNFVRSNISDLADVWVPLQGKLAQACQSKLHLRIFLDHTGGGDVVRDYLNKMEKEVGKKINVRSPQTNSAFQKLFGLPQEEFLINDFTCHLKRKMPLQGRLFLSARIVGFYASIFGNKTKFFFLWEDIEEIQVLPPTLASMGSPIVVMTLRPNRGLDARIGAKTHDEEGRLKFHFHSFVSFNVAQKTIMALWKAKSLTPEQKVQAVEEESEQKLQSEESGLFLGVDDVRFSEVFSLTLPVPVSFFMELFGGGEVDRKAMERAGCQSYSCSPWESEKDDVYERQTYYRDKRISRYRGEVTSTQQKSLVPEKNGWLVEEVMTLHGVPLGDYFNLHLRYQMEESTSKPKTTYVRVYFGIEWLKSTRHQKRVTKNILVNLQDRLKMTFGFLEKEYSSRQQQQQVT.

Positions 1–102 (MKLQVRVVEA…ENQSLGTVWY (102 aa)) constitute a C2 1 domain. Ca(2+) contacts are provided by aspartate 17, aspartate 23, aspartate 69, aspartate 71, and aspartate 77. 2 stretches are compositionally biased toward polar residues: residues 134–144 (TSSGDQTSASR) and 158–172 (TCAS…SSIP). A disordered region spans residues 134 to 172 (TSSGDQTSASRSPDLRLESPIDPSTCASPSRSDDASSIP). The 173-residue stretch at 249–421 (SGGVVVDQLF…LLAQSVKPVD (173 aa)) folds into the VASt 1 domain. Residues 454–474 (FTVLSTFLIGIYVFVHIVFAI) form a helical membrane-spanning segment. One can recognise a C2 2 domain in the interval 517–635 (QARKQKGSDH…NISDLADVWV (119 aa)). Ca(2+) is bound by residues aspartate 551, aspartate 557, aspartate 604, phenylalanine 605, and aspartate 606. Residues 689-752 (AFQKLFGLPQ…LWEDIEEIQV (64 aa)) form the GRAM domain. Residues 848 to 1010 (RFSEVFSLTL…MTFGFLEKEY (163 aa)) form the VASt 2 domain.

Ca(2+) is required as a cofactor.

The protein resides in the membrane. The protein is C2 and GRAM domain-containing protein At1g03370 of Arabidopsis thaliana (Mouse-ear cress).